The following is a 155-amino-acid chain: Small ribosomal subunit protein uS7cz/uS7cy (155 aa).

Belongs to the universal ribosomal protein uS7 family. In terms of assembly, part of the 30S ribosomal subunit.

The protein resides in the plastid. The protein localises to the chloroplast. Its function is as follows. One of the primary rRNA binding proteins, it binds directly to 16S rRNA where it nucleates assembly of the head domain of the 30S subunit. The chain is Small ribosomal subunit protein uS7cz/uS7cy (rps7-A) from Vitis vinifera (Grape).